Consider the following 144-residue polypeptide: Cytochrome c oxidase subunit 4 isoform 1, mitochondrial (144 aa).

The Mitochondrial matrix portion of the chain corresponds to 1–73 (SVVKSEDFSL…SFAEMNRGSN (73 aa)). At K4 the chain carries N6-acetyllysine; alternate. K4 is modified (N6-succinyllysine; alternate). K28 carries the post-translational modification N6-acetyllysine. Residues S31 and S33 each carry the phosphoserine modification. N6-acetyllysine; alternate is present on K35. At K35 the chain carries N6-succinyllysine; alternate. N6-acetyllysine is present on K42. A helical membrane pass occupies residues 74-99 (EWKTVVGGAMFFIGFTALVIMWQKHY). The Mitochondrial intermembrane segment spans residues 100–144 (VYGPLPQSFDKEWVAKQTKRMLDMKVNPIQGLASKWDYEKNEWKK).

It belongs to the cytochrome c oxidase IV family. Component of the cytochrome c oxidase (complex IV, CIV), a multisubunit enzyme composed of 14 subunits. The complex is composed of a catalytic core of 3 subunits MT-CO1, MT-CO2 and MT-CO3, encoded in the mitochondrial DNA, and 11 supernumerary subunits COX4I, COX5A, COX5B, COX6A, COX6B, COX6C, COX7A, COX7B, COX7C, COX8 and NDUFA4, which are encoded in the nuclear genome. The complex exists as a monomer or a dimer and forms supercomplexes (SCs) in the inner mitochondrial membrane with NADH-ubiquinone oxidoreductase (complex I, CI) and ubiquinol-cytochrome c oxidoreductase (cytochrome b-c1 complex, complex III, CIII), resulting in different assemblies (supercomplex SCI(1)III(2)IV(1) and megacomplex MCI(2)III(2)IV(2)). Interacts with PHB2; the interaction decreases in absence of SPHK2. Interacts with AFG1L. Interacts with ABCB7; this interaction allows the regulation of cellular iron homeostasis and cellular reactive oxygen species (ROS) levels in cardiomyocytes. Interacts with FLVCR2; this interaction occurs in the absence of heme and is disrupted upon heme binding. Interacts with IRGC.

Its subcellular location is the mitochondrion inner membrane. Its pathway is energy metabolism; oxidative phosphorylation. In terms of biological role, component of the cytochrome c oxidase, the last enzyme in the mitochondrial electron transport chain which drives oxidative phosphorylation. The respiratory chain contains 3 multisubunit complexes succinate dehydrogenase (complex II, CII), ubiquinol-cytochrome c oxidoreductase (cytochrome b-c1 complex, complex III, CIII) and cytochrome c oxidase (complex IV, CIV), that cooperate to transfer electrons derived from NADH and succinate to molecular oxygen, creating an electrochemical gradient over the inner membrane that drives transmembrane transport and the ATP synthase. Cytochrome c oxidase is the component of the respiratory chain that catalyzes the reduction of oxygen to water. Electrons originating from reduced cytochrome c in the intermembrane space (IMS) are transferred via the dinuclear copper A center (CU(A)) of subunit 2 and heme A of subunit 1 to the active site in subunit 1, a binuclear center (BNC) formed by heme A3 and copper B (CU(B)). The BNC reduces molecular oxygen to 2 water molecules using 4 electrons from cytochrome c in the IMS and 4 protons from the mitochondrial matrix. The polypeptide is Cytochrome c oxidase subunit 4 isoform 1, mitochondrial (COX4I1) (Gorilla gorilla gorilla (Western lowland gorilla)).